Consider the following 130-residue polypeptide: Small ribosomal subunit protein uS8 (130 aa).

It belongs to the universal ribosomal protein uS8 family. In terms of assembly, part of the 30S ribosomal subunit.

Functionally, one of the primary rRNA binding proteins, it binds directly to 16S rRNA central domain where it helps coordinate assembly of the platform of the 30S subunit. This is Small ribosomal subunit protein uS8 (rps8) from Methanocaldococcus jannaschii (strain ATCC 43067 / DSM 2661 / JAL-1 / JCM 10045 / NBRC 100440) (Methanococcus jannaschii).